Reading from the N-terminus, the 72-residue chain is Heat-stable enterotoxin A3/A4 (72 aa).

A signal peptide spans 1–19 (MKKSILFIFLSVLSFSPFA). The propeptide occupies 20–53 (QDAKPVESSKEKITLESKKCNIAKKSNKSGPESM). 3 disulfides stabilise this stretch: cysteine 59-cysteine 64, cysteine 60-cysteine 68, and cysteine 63-cysteine 71.

It belongs to the heat-stable enterotoxin family.

It localises to the secreted. In terms of biological role, toxin which activates the particulate form of guanylate cyclase and increases cyclic GMP levels within the host intestinal epithelial cells. This is Heat-stable enterotoxin A3/A4 (sta3) from Escherichia coli.